The primary structure comprises 87 residues: Kappa 1b-bungarotoxin (87 aa).

Positions 1-21 (MKTLLLTLVVVTIVCLDLGYT) are cleaved as a signal peptide. 5 disulfides stabilise this stretch: Cys24–Cys42, Cys35–Cys63, Cys48–Cys52, Cys67–Cys79, and Cys80–Cys85.

This sequence belongs to the three-finger toxin family. Long-chain subfamily. Kappa-neurotoxin sub-subfamily. As to quaternary structure, homo- and heterodimer; non-covalently linked. Expressed by the venom gland.

It is found in the secreted. Its function is as follows. Postsynaptic neurotoxin that binds and inhibits neuronal nicotinic acetylcholine receptors (nAChR) with high affinity (IC(50)&lt;100 nM). Is a selective, and slowly reversible antagonist of alpha-3/CHRNA3-containing and some alpha-4/CHRNA4-containing AChRs. The chain is Kappa 1b-bungarotoxin from Bungarus candidus (Malayan krait).